The chain runs to 359 residues: Adenosine deaminase (359 aa).

Zn(2+) is bound by residues histidine 15 and histidine 17. 3 residues coordinate substrate: histidine 17, aspartate 19, and glycine 184. Residue histidine 213 participates in Zn(2+) binding. Catalysis depends on glutamate 216, which acts as the Proton donor. Aspartate 295 contributes to the Zn(2+) binding site. Residue aspartate 296 participates in substrate binding.

The protein belongs to the metallo-dependent hydrolases superfamily. Adenosine and AMP deaminases family. Zn(2+) is required as a cofactor.

It is found in the cell membrane. The protein resides in the cell junction. The protein localises to the cytoplasmic vesicle lumen. Its subcellular location is the cytoplasm. It localises to the lysosome. It catalyses the reaction adenosine + H2O + H(+) = inosine + NH4(+). It carries out the reaction 2'-deoxyadenosine + H2O + H(+) = 2'-deoxyinosine + NH4(+). Catalyzes the hydrolytic deamination of adenosine and 2-deoxyadenosine. Plays an important role in purine metabolism and in adenosine homeostasis. Modulates signaling by extracellular adenosine, and so contributes indirectly to cellular signaling events. May act as a positive regulator of T-cell coactivation. The polypeptide is Adenosine deaminase (ada) (Danio rerio (Zebrafish)).